Here is a 227-residue protein sequence, read N- to C-terminus: Fibrillarin-like rRNA/tRNA 2'-O-methyltransferase (227 aa).

S-adenosyl-L-methionine is bound by residues 86-87 (TT), 105-106 (EF), 130-131 (DA), and 150-153 (DVAQ).

It belongs to the methyltransferase superfamily. Fibrillarin family. In terms of assembly, interacts with nop5. Component of box C/D small ribonucleoprotein (sRNP) particles that contain rpl7ae, FlpA and nop5, plus a guide RNA. These sRNP particles form homodimers, giving rise to an asymmetric holoenzyme.

Involved in pre-rRNA and tRNA processing. Utilizes the methyl donor S-adenosyl-L-methionine to catalyze the site-specific 2'-hydroxyl methylation of ribose moieties in rRNA and tRNA. Site specificity is provided by a guide RNA that base pairs with the substrate. Methylation occurs at a characteristic distance from the sequence involved in base pairing with the guide RNA. The polypeptide is Fibrillarin-like rRNA/tRNA 2'-O-methyltransferase (Pyrococcus furiosus (strain ATCC 43587 / DSM 3638 / JCM 8422 / Vc1)).